The following is a 417-amino-acid chain: MVILAIGGYDPTSGAGISADIKTAHTLGVYCPTITTSVIPQNNKMVYEKFDLPEENIKNQFKAVFEEFDIEYVKTGVLTKPAIDTLLKYIDKYDLKVICDPVLASTTKFSFVDEKLMEKYIELFNKSFLITPNKEEYKKIMEFIKNNNLMIRNDLYILATGIDDILMKNFKPIKTFKGFRVDKEVHGTGCVYSTAITAFLSKGYDLEEAIKEAKRFVLSSVIYAKKSKFGYNSNPTYINKEKVIKNLSYAIYLLKKMNFTLIPEVGSNIAESLPFPKDFKDVAALTGRIIKNKLGGFYIVGDIEFGASEHIAKIILSASKFNPEIRACMNIKYDGGLIKLLKDKFAVSSFDRKEEPPNVSTMEWGTKIACEKFGGVPDIIYDRGGEGKEPMIRVLGRDAIEVVKKVEVIQKIYNTLM.

Residues 1-235 (MVILAIGGYD…KSKFGYNSNP (235 aa)) are hydroxymethylpyrimidine/phosphomethylpyrimidine kinase. Residue Gln-41 coordinates 4-amino-5-hydroxymethyl-2-methylpyrimidine. The segment at 236–417 (TYINKEKVIK…VIQKIYNTLM (182 aa)) is thiamine-phosphate synthase.

This sequence in the N-terminal section; belongs to the ThiD family. In the C-terminal section; belongs to the ThiN family.

The catalysed reaction is 4-amino-5-hydroxymethyl-2-methylpyrimidine + ATP = 4-amino-2-methyl-5-(phosphooxymethyl)pyrimidine + ADP + H(+). It catalyses the reaction 4-amino-2-methyl-5-(phosphooxymethyl)pyrimidine + ATP = 4-amino-2-methyl-5-(diphosphooxymethyl)pyrimidine + ADP. The enzyme catalyses 2-[(2R,5Z)-2-carboxy-4-methylthiazol-5(2H)-ylidene]ethyl phosphate + 4-amino-2-methyl-5-(diphosphooxymethyl)pyrimidine + 2 H(+) = thiamine phosphate + CO2 + diphosphate. It carries out the reaction 2-(2-carboxy-4-methylthiazol-5-yl)ethyl phosphate + 4-amino-2-methyl-5-(diphosphooxymethyl)pyrimidine + 2 H(+) = thiamine phosphate + CO2 + diphosphate. The catalysed reaction is 4-methyl-5-(2-phosphooxyethyl)-thiazole + 4-amino-2-methyl-5-(diphosphooxymethyl)pyrimidine + H(+) = thiamine phosphate + diphosphate. It participates in cofactor biosynthesis; thiamine diphosphate biosynthesis; 4-amino-2-methyl-5-diphosphomethylpyrimidine from 5-amino-1-(5-phospho-D-ribosyl)imidazole. The protein operates within cofactor biosynthesis; thiamine diphosphate biosynthesis; thiamine phosphate from 4-amino-2-methyl-5-diphosphomethylpyrimidine and 4-methyl-5-(2-phosphoethyl)-thiazole: step 1/1. In terms of biological role, catalyzes the phosphorylation of hydroxymethylpyrimidine phosphate (HMP-P) to HMP-PP, and of HMP to HMP-P. Condenses 4-methyl-5-(beta-hydroxyethyl)thiazole monophosphate (THZ-P) and 4-amino-5-hydroxymethyl pyrimidine pyrophosphate (HMP-PP) to form thiamine monophosphate (TMP). In Methanocaldococcus jannaschii (strain ATCC 43067 / DSM 2661 / JAL-1 / JCM 10045 / NBRC 100440) (Methanococcus jannaschii), this protein is Bifunctional thiamine biosynthesis protein ThiDN (thiDN).